Reading from the N-terminus, the 116-residue chain is Large ribosomal subunit protein uL22 (116 aa).

This sequence belongs to the universal ribosomal protein uL22 family. Part of the 50S ribosomal subunit.

This protein binds specifically to 23S rRNA; its binding is stimulated by other ribosomal proteins, e.g. L4, L17, and L20. It is important during the early stages of 50S assembly. It makes multiple contacts with different domains of the 23S rRNA in the assembled 50S subunit and ribosome. Its function is as follows. The globular domain of the protein is located near the polypeptide exit tunnel on the outside of the subunit, while an extended beta-hairpin is found that lines the wall of the exit tunnel in the center of the 70S ribosome. In Gloeobacter violaceus (strain ATCC 29082 / PCC 7421), this protein is Large ribosomal subunit protein uL22.